Consider the following 214-residue polypeptide: Phosphatidylserine decarboxylase proenzyme (214 aa).

Ser182 serves as the catalytic Schiff-base intermediate with substrate; via pyruvic acid. Position 182 is a pyruvic acid (Ser); by autocatalysis (Ser182).

It belongs to the phosphatidylserine decarboxylase family. PSD-A subfamily. As to quaternary structure, heterodimer of a large membrane-associated beta subunit and a small pyruvoyl-containing alpha subunit. The cofactor is pyruvate. In terms of processing, is synthesized initially as an inactive proenzyme. Formation of the active enzyme involves a self-maturation process in which the active site pyruvoyl group is generated from an internal serine residue via an autocatalytic post-translational modification. Two non-identical subunits are generated from the proenzyme in this reaction, and the pyruvate is formed at the N-terminus of the alpha chain, which is derived from the carboxyl end of the proenzyme. The post-translation cleavage follows an unusual pathway, termed non-hydrolytic serinolysis, in which the side chain hydroxyl group of the serine supplies its oxygen atom to form the C-terminus of the beta chain, while the remainder of the serine residue undergoes an oxidative deamination to produce ammonia and the pyruvoyl prosthetic group on the alpha chain.

Its subcellular location is the cell membrane. The enzyme catalyses a 1,2-diacyl-sn-glycero-3-phospho-L-serine + H(+) = a 1,2-diacyl-sn-glycero-3-phosphoethanolamine + CO2. The protein operates within phospholipid metabolism; phosphatidylethanolamine biosynthesis; phosphatidylethanolamine from CDP-diacylglycerol: step 2/2. Catalyzes the formation of phosphatidylethanolamine (PtdEtn) from phosphatidylserine (PtdSer). The sequence is that of Phosphatidylserine decarboxylase proenzyme from Burkholderia lata (strain ATCC 17760 / DSM 23089 / LMG 22485 / NCIMB 9086 / R18194 / 383).